The chain runs to 1322 residues: BRCA2-interacting transcriptional repressor EMSY (1322 aa).

The tract at residues 1–478 is interaction with BRCA2; it reads MPVVWPTLLD…LPKPVTATLP (478 aa). The ENT domain occupies 16 to 100; that stretch reads CKRILRKLEL…EWSIEGRRLV (85 aa). Positions 104–108 are interaction with ZMYND11; it reads PRLVP. Low complexity predominate over residues 148 to 162; it reads STTSTPTSTPVPSGS. Disordered regions lie at residues 148-178 and 192-215; these read STTSTPTSTPVPSGSIATVKSPRPASPASNV and VSCSDEDEKPRKRRRTNSSSSSPV. A Phosphothreonine modification is found at Thr-207. Phosphoserine is present on residues Ser-209 and Ser-213. 2 O-linked (GlcNAc) serine glycosylation sites follow: Ser-228 and Ser-236. Residue Ser-238 is modified to Phosphoserine. A glycan (O-linked (GlcNAc) threonine) is linked at Thr-271. Residues 417 to 437 show a composition bias toward low complexity; that stretch reads QQTQQQVAQPSPVSHQQQPQQ. Residues 417 to 444 form a disordered region; the sequence is QQTQQQVAQPSPVSHQQQPQQSPLPPGI. O-linked (GlcNAc) threonine glycans are attached at residues Thr-501 and Thr-506. Ser-557 carries O-linked (GlcNAc) serine glycosylation. Residues 698-707 show a composition bias toward polar residues; it reads VAEAGNSSIQ. The segment at 698-736 is disordered; that stretch reads VAEAGNSSIQEGKEEPQNYTDSSSSSTESSQSSQDSQPV. Over residues 717–734 the composition is skewed to low complexity; it reads TDSSSSSTESSQSSQDSQ. Phosphoserine occurs at positions 818 and 821. Residue Thr-1120 is glycosylated (O-linked (GlcNAc) threonine). A Phosphoserine modification is found at Ser-1136. Residues 1205-1223 are compositionally biased toward polar residues; the sequence is QKCRESCSSPSTVGSSLTT. 2 disordered regions span residues 1205-1231 and 1290-1322; these read QKCRESCSSPSTVGSSLTTRKIDPPAV and QLDDEETAMEQDIDSSTEDGTEPSPSQSSAERS. The segment covering 1291–1310 has biased composition (acidic residues); that stretch reads LDDEETAMEQDIDSSTEDGT. Residues 1312–1322 are compositionally biased toward polar residues; sequence PSPSQSSAERS.

In terms of assembly, homodimer. Interacts with the transactivation domain of BRCA2. Interacts with CBX1 (via chromoshadow domain). Interacts with ZMYND11. Does not interact with CBX3 or CBX5. Component of a nuclear receptor-mediated transcription complex composed of at least ZNF335, CCAR2 and EMSY; the complex stimulates the transcription of nuclear receptor target genes such as SOX9 and HOXA1. Within the complex interacts with CCAR2 and ZNF335. Components of this complex may associate with components of a histone methylation complex to form a complex at least composed of ZNF335, HCFC1, CCAR2, EMSY, MKI67, RBBP5, ASH2L and WDR5. Within this complex, interacts with ASH2L and RBBP5. O-glycosylated during cytokinesis at sites identical or close to phosphorylation sites, this interferes with the phosphorylation status.

Its subcellular location is the nucleus. Its function is as follows. Regulator which is able to repress transcription, possibly via its interaction with a multiprotein chromatin remodeling complex that modifies the chromatin. Its interaction with BRCA2 suggests that it may play a central role in the DNA repair function of BRCA2. Mediates ligand-dependent transcriptional activation by nuclear hormone receptors. The polypeptide is BRCA2-interacting transcriptional repressor EMSY (Homo sapiens (Human)).